Here is a 486-residue protein sequence, read N- to C-terminus: Glutamyl-tRNA(Gln) amidotransferase subunit A (486 aa).

Residues K75 and S150 each act as charge relay system in the active site. The active-site Acyl-ester intermediate is the S174.

This sequence belongs to the amidase family. GatA subfamily. As to quaternary structure, heterotrimer of A, B and C subunits.

It carries out the reaction L-glutamyl-tRNA(Gln) + L-glutamine + ATP + H2O = L-glutaminyl-tRNA(Gln) + L-glutamate + ADP + phosphate + H(+). In terms of biological role, allows the formation of correctly charged Gln-tRNA(Gln) through the transamidation of misacylated Glu-tRNA(Gln) in organisms which lack glutaminyl-tRNA synthetase. The reaction takes place in the presence of glutamine and ATP through an activated gamma-phospho-Glu-tRNA(Gln). The protein is Glutamyl-tRNA(Gln) amidotransferase subunit A of Trichormus variabilis (strain ATCC 29413 / PCC 7937) (Anabaena variabilis).